A 470-amino-acid chain; its full sequence is tRNA-2-methylthio-N(6)-dimethylallyladenosine synthase (470 aa).

The 118-residue stretch at 5-122 (RKLYVKSFGC…LPELLAEAKA (118 aa)) folds into the MTTase N-terminal domain. Residues cysteine 14, cysteine 50, cysteine 85, cysteine 163, cysteine 167, and cysteine 170 each coordinate [4Fe-4S] cluster. One can recognise a Radical SAM core domain in the interval 149–383 (RSRGPAAFVT…LLEASKAAFD (235 aa)). The 63-residue stretch at 384 to 446 (ESCRGRTFDI…PNSLAGVPAE (63 aa)) folds into the TRAM domain. Residues 439–470 (SLAGVPAEASEPSVSQSPVSSARSRPLAAMEA) form a disordered region. A compositionally biased stretch (low complexity) spans 444 to 464 (PAEASEPSVSQSPVSSARSRP).

The protein belongs to the methylthiotransferase family. MiaB subfamily. In terms of assembly, monomer. [4Fe-4S] cluster is required as a cofactor.

It is found in the cytoplasm. It catalyses the reaction N(6)-dimethylallyladenosine(37) in tRNA + (sulfur carrier)-SH + AH2 + 2 S-adenosyl-L-methionine = 2-methylsulfanyl-N(6)-dimethylallyladenosine(37) in tRNA + (sulfur carrier)-H + 5'-deoxyadenosine + L-methionine + A + S-adenosyl-L-homocysteine + 2 H(+). Functionally, catalyzes the methylthiolation of N6-(dimethylallyl)adenosine (i(6)A), leading to the formation of 2-methylthio-N6-(dimethylallyl)adenosine (ms(2)i(6)A) at position 37 in tRNAs that read codons beginning with uridine. The sequence is that of tRNA-2-methylthio-N(6)-dimethylallyladenosine synthase from Xanthobacter autotrophicus (strain ATCC BAA-1158 / Py2).